The sequence spans 548 residues: Glucose-6-phosphate isomerase 1 (548 aa).

Residue E353 is the Proton donor of the active site. Residues H384 and K495 contribute to the active site.

Belongs to the GPI family.

The protein resides in the cytoplasm. The enzyme catalyses alpha-D-glucose 6-phosphate = beta-D-fructose 6-phosphate. It functions in the pathway carbohydrate biosynthesis; gluconeogenesis. Its pathway is carbohydrate degradation; glycolysis; D-glyceraldehyde 3-phosphate and glycerone phosphate from D-glucose: step 2/4. Catalyzes the reversible isomerization of glucose-6-phosphate to fructose-6-phosphate. The protein is Glucose-6-phosphate isomerase 1 of Chromohalobacter salexigens (strain ATCC BAA-138 / DSM 3043 / CIP 106854 / NCIMB 13768 / 1H11).